A 146-amino-acid chain; its full sequence is 3-hydroxyacyl-[acyl-carrier-protein] dehydratase FabZ (146 aa).

H49 is a catalytic residue.

This sequence belongs to the thioester dehydratase family. FabZ subfamily.

Its subcellular location is the cytoplasm. It catalyses the reaction a (3R)-hydroxyacyl-[ACP] = a (2E)-enoyl-[ACP] + H2O. Functionally, involved in unsaturated fatty acids biosynthesis. Catalyzes the dehydration of short chain beta-hydroxyacyl-ACPs and long chain saturated and unsaturated beta-hydroxyacyl-ACPs. The sequence is that of 3-hydroxyacyl-[acyl-carrier-protein] dehydratase FabZ from Pseudomonas savastanoi pv. phaseolicola (strain 1448A / Race 6) (Pseudomonas syringae pv. phaseolicola (strain 1448A / Race 6)).